The sequence spans 341 residues: tRNA N6-adenosine threonylcarbamoyltransferase (341 aa).

Positions 111 and 115 each coordinate Fe cation. Substrate-binding positions include 134–138 (LVSGG), D167, G180, and N276. D304 lines the Fe cation pocket.

This sequence belongs to the KAE1 / TsaD family. Requires Fe(2+) as cofactor.

It is found in the cytoplasm. It carries out the reaction L-threonylcarbamoyladenylate + adenosine(37) in tRNA = N(6)-L-threonylcarbamoyladenosine(37) in tRNA + AMP + H(+). Its function is as follows. Required for the formation of a threonylcarbamoyl group on adenosine at position 37 (t(6)A37) in tRNAs that read codons beginning with adenine. Is involved in the transfer of the threonylcarbamoyl moiety of threonylcarbamoyl-AMP (TC-AMP) to the N6 group of A37, together with TsaE and TsaB. TsaD likely plays a direct catalytic role in this reaction. The sequence is that of tRNA N6-adenosine threonylcarbamoyltransferase from Pseudomonas entomophila (strain L48).